The chain runs to 479 residues: Protein TRIGALACTOSYLDIACYLGLYCEROL 4, chloroplastic (479 aa).

The chain crosses the lipid bilayer at residues 288–310 (VFLSSPHVAVSGIIGSVMTAAFG).

As to quaternary structure, homodimer. Forms dimeric beta-barrel. Interacts with TGD5.

The protein localises to the plastid. Its subcellular location is the chloroplast outer membrane. It localises to the endoplasmic reticulum. Functionally, involved in lipid transfer from the endoplasmic reticulum (ER) to plastids. Specifically binds phosphatidic acid (PtdOH). The sequence is that of Protein TRIGALACTOSYLDIACYLGLYCEROL 4, chloroplastic from Arabidopsis thaliana (Mouse-ear cress).